The primary structure comprises 308 residues: HTH-type transcriptional regulator SsuR (308 aa).

Residues 1–59 form the HTH lysR-type domain; it reads MNFQQLRFVREAVRQNMNLTEVANVLYTSQSGVSKQIKDLEDELGVDIFIRRGKRLTGL. The segment at residues 19–38 is a DNA-binding region (H-T-H motif); the sequence is LTEVANVLYTSQSGVSKQIK.

This sequence belongs to the LysR transcriptional regulatory family.

Its function is as follows. Transcriptional regulator that is essential for the utilization of a number of organic sulfur sources of either environmental or human origin. Required for aliphatic sulfonate utilization. Binds to DNA at target promoter regions. Targets include the ssuDBC operon, the tauABC operon, three tauD-type genes and atsA. The polypeptide is HTH-type transcriptional regulator SsuR (Burkholderia cenocepacia (strain ATCC BAA-245 / DSM 16553 / LMG 16656 / NCTC 13227 / J2315 / CF5610) (Burkholderia cepacia (strain J2315))).